Here is a 252-residue protein sequence, read N- to C-terminus: Small ribosomal subunit protein uS2B (252 aa).

Ser2 carries the N-acetylserine modification. Composition is skewed to acidic residues over residues 213-229 (VAEE…EEVK) and 241-252 (EWAEENADNVEW). Residues 213 to 252 (VAEEAAAAEEGEEEEVKEEVTEGQAEATEWAEENADNVEW) form a disordered region.

Belongs to the universal ribosomal protein uS2 family. In terms of assembly, component of the small ribosomal subunit. Mature ribosomes consist of a small (40S) and a large (60S) subunit. The 40S subunit contains about 33 different proteins and 1 molecule of RNA (18S). The 60S subunit contains about 49 different proteins and 3 molecules of RNA (25S, 5.8S and 5S). Interacts with RPS21.

The protein resides in the cytoplasm. Required for the assembly and/or stability of the 40S ribosomal subunit. Required for the processing of the 20S rRNA-precursor to mature 18S rRNA in a late step of the maturation of 40S ribosomal subunits. This chain is Small ribosomal subunit protein uS2B, found in Saccharomyces cerevisiae (strain RM11-1a) (Baker's yeast).